Here is a 258-residue protein sequence, read N- to C-terminus: L-aspartate dehydrogenase 1 (258 aa).

Alanine 121 and asparagine 181 together coordinate NAD(+). Residue histidine 211 is part of the active site.

This sequence belongs to the L-aspartate dehydrogenase family.

The catalysed reaction is L-aspartate + NADP(+) + H2O = oxaloacetate + NH4(+) + NADPH + H(+). The enzyme catalyses L-aspartate + NAD(+) + H2O = oxaloacetate + NH4(+) + NADH + H(+). It participates in cofactor biosynthesis; NAD(+) biosynthesis; iminoaspartate from L-aspartate (dehydrogenase route): step 1/1. Specifically catalyzes the NAD or NADP-dependent dehydrogenation of L-aspartate to iminoaspartate. In Bordetella bronchiseptica (strain ATCC BAA-588 / NCTC 13252 / RB50) (Alcaligenes bronchisepticus), this protein is L-aspartate dehydrogenase 1.